The following is a 1403-amino-acid chain: E3 ubiquitin-protein ligase SNT2 (1403 aa).

The interval 40-62 (SGAKTKGSNSQTPRNCKRTSNPA) is disordered. Positions 45–62 (KGSNSQTPRNCKRTSNPA) are enriched in polar residues. One can recognise a BAH domain in the interval 121–258 (VLLSANDTIY…RYTLKYYKVY (138 aa)). The PHD-type 1 zinc finger occupies 317–369 (DKRCQFCKEWCIQKESLSCDECGVCAHLYCMDPPLDRKPNKDVVWTCFSCLQK). Residues 555 to 606 (LKEPSFTAVEIRKFEEAVEKFGSELRPVCEYVGTQPMSMIVRFYYNWKKTER) enclose the SANT domain. Residues 1038–1097 (RTFCSVCKEKFNDNDNYEVVCGNCGLTVHYFCYAIKLPKDMKKNTNLKTFKWLCDPCSND) form a PHD-type 2 zinc finger. Residues 1041–1095 (CSVCKEKFNDNDNYEVVCGNCGLTVHYFCYAIKLPKDMKKNTNLKTFKWLCDPCS) form an RING-type; degenerate zinc finger. The C2HC pre-PHD-type zinc-finger motif lies at 1105–1153 (TYQCSMCPTKDYDYDRYRSQSFKICPDALKCTSLGTWVHLVCSLFNEDI). A PHD-type 3; degenerate zinc finger spans residues 1177-1231 (FTCGVCRINGGGLVKCNKCQYRYHITCAQNSSNFKLMFEKKNMSVDTTLPCIKDV).

In terms of assembly, component of the Snt2C complex composed of SNT2, ECM5 and RPD3. Interacts with the E2 ubiquitin-conjugating enzyme UBC4 and histones H3 and H4. Binding is enhanced to methylated histone H3K36me3.

It is found in the cytoplasm. It localises to the nucleus. The enzyme catalyses S-ubiquitinyl-[E2 ubiquitin-conjugating enzyme]-L-cysteine + [acceptor protein]-L-lysine = [E2 ubiquitin-conjugating enzyme]-L-cysteine + N(6)-ubiquitinyl-[acceptor protein]-L-lysine.. Functionally, transcriptional regulator that, together with ECM5, recruits histone deacetylase RPD3 to a small number of promoters of stress-response genes in response to oxidative stress. Probable ubiquitin-protein ligase involved in the degradation-related ubiquitination of histones. Contributes to the post-translational regulation of histone protein levels by polyubiquitination of excess histones for subsequent degradation. This is E3 ubiquitin-protein ligase SNT2 from Saccharomyces cerevisiae (strain ATCC 204508 / S288c) (Baker's yeast).